The primary structure comprises 1072 residues: Carbamoyl phosphate synthase large chain (1072 aa).

Positions 1-401 are carboxyphosphate synthetic domain; the sequence is MPKRLDINTI…SLLKAVRSLE (401 aa). Arg129, Arg169, Gly175, Gly176, Lys208, Ile210, Glu215, Gly241, Val242, His243, Gln284, and Glu298 together coordinate ATP. The 195-residue stretch at 133-327 folds into the ATP-grasp 1 domain; the sequence is RTLMQELNEP…IAKLAAKIAV (195 aa). Mg(2+) is bound by residues Gln284, Glu298, and Asn300. Positions 284, 298, and 300 each coordinate Mn(2+). The oligomerization domain stretch occupies residues 402 to 546; it reads LGIYHLELDH…YSTYADENES (145 aa). The carbamoyl phosphate synthetic domain stretch occupies residues 547–929; sequence IVTDRKSVVV…ALYKGLVASG (383 aa). Residues 671-861 enclose the ATP-grasp 2 domain; the sequence is EAALTKLGIP…MANVATKVIL (191 aa). Residues Arg707, Arg746, Glu752, Gly777, Val778, His779, Ser780, Gln820, and Glu832 each coordinate ATP. The Mg(2+) site is built by Gln820, Glu832, and Asn834. Gln820, Glu832, and Asn834 together coordinate Mn(2+). The MGS-like domain maps to 930–1072; sequence INIPTHGSVI…QTKRHEVVHA (143 aa). The interval 930 to 1072 is allosteric domain; it reads INIPTHGSVI…QTKRHEVVHA (143 aa).

It belongs to the CarB family. As to quaternary structure, composed of two chains; the small (or glutamine) chain promotes the hydrolysis of glutamine to ammonia, which is used by the large (or ammonia) chain to synthesize carbamoyl phosphate. Tetramer of heterodimers (alpha,beta)4. Mg(2+) is required as a cofactor. Mn(2+) serves as cofactor.

It catalyses the reaction hydrogencarbonate + L-glutamine + 2 ATP + H2O = carbamoyl phosphate + L-glutamate + 2 ADP + phosphate + 2 H(+). The catalysed reaction is hydrogencarbonate + NH4(+) + 2 ATP = carbamoyl phosphate + 2 ADP + phosphate + 2 H(+). It participates in amino-acid biosynthesis; L-arginine biosynthesis; carbamoyl phosphate from bicarbonate: step 1/1. Its pathway is pyrimidine metabolism; UMP biosynthesis via de novo pathway; (S)-dihydroorotate from bicarbonate: step 1/3. Its function is as follows. Large subunit of the glutamine-dependent carbamoyl phosphate synthetase (CPSase). CPSase catalyzes the formation of carbamoyl phosphate from the ammonia moiety of glutamine, carbonate, and phosphate donated by ATP, constituting the first step of 2 biosynthetic pathways, one leading to arginine and/or urea and the other to pyrimidine nucleotides. The large subunit (synthetase) binds the substrates ammonia (free or transferred from glutamine from the small subunit), hydrogencarbonate and ATP and carries out an ATP-coupled ligase reaction, activating hydrogencarbonate by forming carboxy phosphate which reacts with ammonia to form carbamoyl phosphate. The chain is Carbamoyl phosphate synthase large chain from Bacillus thuringiensis subsp. konkukian (strain 97-27).